A 107-amino-acid polypeptide reads, in one-letter code: U1-lycotoxin-Ls1p (107 aa).

The first 20 residues, 1–20 (MMKVLVVVALLVTLISYSSS), serve as a signal peptide directing secretion. The propeptide occupies 21-41 (EGIDDLEADELLSLMANEQTR). Cystine bridges form between Cys44–Cys59, Cys51–Cys68, Cys58–Cys86, and Cys70–Cys84.

The protein belongs to the neurotoxin 19 (CSTX) family. 04 (U1-Lctx) subfamily. Expressed by the venom gland.

It is found in the secreted. The protein is U1-lycotoxin-Ls1p of Lycosa singoriensis (Wolf spider).